A 318-amino-acid chain; its full sequence is Methionyl-tRNA formyltransferase (318 aa).

(6S)-5,6,7,8-tetrahydrofolate is bound at residue 112 to 115 (SILP).

This sequence belongs to the Fmt family.

The enzyme catalyses L-methionyl-tRNA(fMet) + (6R)-10-formyltetrahydrofolate = N-formyl-L-methionyl-tRNA(fMet) + (6S)-5,6,7,8-tetrahydrofolate + H(+). In terms of biological role, attaches a formyl group to the free amino group of methionyl-tRNA(fMet). The formyl group appears to play a dual role in the initiator identity of N-formylmethionyl-tRNA by promoting its recognition by IF2 and preventing the misappropriation of this tRNA by the elongation apparatus. In Shewanella sp. (strain MR-4), this protein is Methionyl-tRNA formyltransferase.